The primary structure comprises 249 residues: U2 small nuclear ribonucleoprotein A' (249 aa).

4 LRR repeats span residues 20 to 41, 43 to 64, 65 to 87, and 89 to 110; these read KERELDLRGNKIPVIENLGATE, QFDTIDLSDNEIVKLENFPYLN, RLGTLLINNNRITRINPNLGEFL, and KLHSLVLTNNRLVNLVEIDPLA. Residues 123–161 enclose the LRRCT domain; that stretch reads NNITKKANYRLYVIHKLKSLRVLDFIKIKAKERAEAASL.

This sequence belongs to the U2 small nuclear ribonucleoprotein A family.

The protein resides in the nucleus. It is found in the nucleus speckle. In terms of biological role, this protein is associated with sn-RNP U2. It helps the A' protein to bind stem loop IV of U2 snRNA. The sequence is that of U2 small nuclear ribonucleoprotein A' from Arabidopsis thaliana (Mouse-ear cress).